The chain runs to 285 residues: NAC domain-containing protein 92 (285 aa).

The region spanning 20–170 is the NAC domain; that stretch reads LPPGFRFHPT…EWVICRVFQK (151 aa). A DNA-binding region spans residues 117–176; the sequence is VGMKKTLVFYKGRAPKGVKTNWVMHEYRLEGKYCIENLPQTAKNEWVICRVFQKRADGTK.

Forms homodimers. Interacts with GLK1 and GLK2. Interacts with NLA. In terms of processing, ubiquitinated by NLA. Ubiquitination of NAC92 leads to its degradation by the proteasome during leaf senescence under nitrogen deficiency. Mostly expressed in roots and flowers, and, to a lower extent, in shoots and leaves. Particularly expressed in old and senescing tissues.

The protein localises to the nucleus. Functionally, transcription activator that binds to DNA in promoters of target genes on a specific bipartite motif 5'-[ACG][CA]GT[AG](5-6n)[CT]AC[AG]-3'. Promotes lateral root development. Triggers the expression of senescence-associated genes during age-, salt- and dark-induced senescence through a regulatory network that may involve cross-talk with salt- and H(2)O(2)-dependent signaling pathways. Also regulates genes during seed germination. Positively regulates aging-induced cell death. Involved in age-related resistance (ARR) against Pseudomonas syringae pv. tomato and Hyaloperonospora arabidopsidis. Antagonizes GLK1 and GLK2 transcriptional activity, shifting the balance from chloroplast maintenance towards deterioration during leaf senescence. Promotes the expression of senescence-associated genes, including ENDO1/BFN1, SWEET15/SAG29 and SINA1/At3g13672, during senescence onset. In Arabidopsis thaliana (Mouse-ear cress), this protein is NAC domain-containing protein 92.